The sequence spans 237 residues: 6-carboxyhexanoate--CoA ligase (237 aa).

The protein belongs to the BioW family. As to quaternary structure, homodimer. Mg(2+) is required as a cofactor.

The enzyme catalyses heptanedioate + ATP + CoA = 6-carboxyhexanoyl-CoA + AMP + diphosphate. It participates in metabolic intermediate metabolism; pimeloyl-CoA biosynthesis; pimeloyl-CoA from pimelate: step 1/1. Catalyzes the transformation of pimelate into pimeloyl-CoA with concomitant hydrolysis of ATP to AMP. The sequence is that of 6-carboxyhexanoate--CoA ligase from Methanocaldococcus jannaschii (strain ATCC 43067 / DSM 2661 / JAL-1 / JCM 10045 / NBRC 100440) (Methanococcus jannaschii).